A 127-amino-acid polypeptide reads, in one-letter code: MSQGLPAAGSVLQRSVAAPGNQPQPQPQQQSPEDDDRKVRRREKNRVAAQRSRKKQTQKADKLHEEYESLEQENTMLRREIGKLTEELKHLTEALKEHEKMCPLLLCPMNFVPVPPRPDPVAGCLPR.

Residues 1-72 form a disordered region; the sequence is MSQGLPAAGS…LHEEYESLEQ (72 aa). Phosphoserine is present on residues S2 and S31. One can recognise a bZIP domain in the interval 35–98; it reads DDRKVRRREK…KHLTEALKEH (64 aa). Residues 37–62 form a basic motif region; that stretch reads RKVRRREKNRVAAQRSRKKQTQKADK. A compositionally biased stretch (basic and acidic residues) spans 58–67; the sequence is QKADKLHEEY. The leucine-zipper stretch occupies residues 63–91; it reads LHEEYESLEQENTMLRREIGKLTEELKHL.

It belongs to the bZIP family. As to quaternary structure, heterodimer; heterodimerizes with JUN family proteins. Interacts with JUN.

It localises to the nucleus. Its function is as follows. AP-1 family transcription factor that controls the differentiation of CD8(+) thymic conventional dendritic cells in the immune system. Required for development of CD8-alpha(+) classical dendritic cells (cDCs) and related CD103(+) dendritic cells that cross-present antigens to CD8 T-cells and produce interleukin-12 (IL12) in response to pathogens. Acts via the formation of a heterodimer with JUN family proteins that recognizes and binds DNA sequence 5'-TGA[CG]TCA-3' and regulates expression of target genes. The chain is Basic leucine zipper transcriptional factor ATF-like 3 (BATF3) from Homo sapiens (Human).